The chain runs to 309 residues: MANIFENCSYHSPYEPYYLNCTNTTNQCTLVQDVETIESIIFWIDFLIPCTLFVVACFLNAYYLSILVPEFTEMNDITKKQYIFMVSRAISALTACVIMLALRILQLITSSFTIYFLFFLIDDLSFYSLLGSYVGSAILLYLATIRPILYSNRISVRTVYKFAIANLITSVVLAITTAMFQAADLSDGPFQCDLKHCQPITNMIMLVLILTSFLIPIVTLSFVLVTLCFYKNRSESIGDFTTDNSVSKSARTRLAWTLFTFTLITLTEAIPSFYLVGTSIGQLLSTWILCAHCYSIPEYEKFGYNIQKS.

The next 6 helical transmembrane spans lie at 39-59 (SIIFWIDFLIPCTLFVVACFL), 82-102 (YIFMVSRAISALTACVIMLAL), 114-134 (IYFLFFLIDDLSFYSLLGSYV), 162-182 (FAIANLITSVVLAITTAMFQA), 204-224 (IMLVLILTSFLIPIVTLSFVL), and 256-276 (WTLFTFTLITLTEAIPSFYLV).

Belongs to the G-protein coupled receptor 1 family. B0244 subfamily.

It is found in the cell membrane. The polypeptide is Putative G-protein coupled receptor B0244.4 (Caenorhabditis elegans).